A 459-amino-acid chain; its full sequence is AGFKAGVKDYKLTYYTPDYKTKDTDILAAFRMTPQPGVPPEEAGRAVAAESSTGTWTTVWTDGLTSLDRYKGRCYHIEPVAGEENQYIAYVAYPLDLFEEGSVTNMFTSIVGNVFGFKALRALRLEDLRIPPAYVKTFQGPPHGIQVERDKLNKYGRPLLGCTIKPKLGLSAKNYGRAVYECLRGGLDFTKDDENVNSQPFMRWRDRFLFCAEAIYKAQAETGEIKGHYLNATAGTCEEMNKRAVFARELGVPIVMHDYLTGGFTANTSLAHYCRDNGLLLHIHRAMHAVIDRQKNHGIHFRVLAKALRMSGGDHIHSGTVVGKLEGEREITLGFVDLLRDDFIEKDRTRGIYFTQDWVSLPGVLPVASGGIHVWHMPALTEIFGDDSVLQFGGGTLXXPWGNAPGAVANRVALEACVQARNEGRDLAREGNEIIREASKWSPELAAACEVWKEIKFEF.

Lys4 is subject to N6,N6,N6-trimethyllysine. The substrate site is built by Asn113 and Thr163. Catalysis depends on Lys165, which acts as the Proton acceptor. Lys167 serves as a coordination point for substrate. The Mg(2+) site is built by Lys191, Asp193, and Glu194. The residue at position 191 (Lys191) is an N6-carboxylysine. Catalysis depends on His284, which acts as the Proton acceptor. Residues Arg285, His317, and Ser369 each contribute to the substrate site.

Belongs to the RuBisCO large chain family. Type I subfamily. Heterohexadecamer of 8 large chains and 8 small chains; disulfide-linked. The disulfide link is formed within the large subunit homodimers. Mg(2+) is required as a cofactor. The disulfide bond which can form in the large chain dimeric partners within the hexadecamer appears to be associated with oxidative stress and protein turnover.

Its subcellular location is the plastid. The protein localises to the chloroplast. The catalysed reaction is 2 (2R)-3-phosphoglycerate + 2 H(+) = D-ribulose 1,5-bisphosphate + CO2 + H2O. It catalyses the reaction D-ribulose 1,5-bisphosphate + O2 = 2-phosphoglycolate + (2R)-3-phosphoglycerate + 2 H(+). In terms of biological role, ruBisCO catalyzes two reactions: the carboxylation of D-ribulose 1,5-bisphosphate, the primary event in carbon dioxide fixation, as well as the oxidative fragmentation of the pentose substrate in the photorespiration process. Both reactions occur simultaneously and in competition at the same active site. The chain is Ribulose bisphosphate carboxylase large chain from Cephalotus follicularis (Albany pitcher plant).